The primary structure comprises 720 residues: Receptor-like protein CLAVATA2 (720 aa).

Positions 1-25 (MIKIADFTLFFFIFVFSPSLPLAQS) are cleaved as a signal peptide. Residues 26-92 (QLPDLDPQDK…LNLSSQIHPS (67 aa)) are N-cap. At 26-686 (QLPDLDPQDK…QNELVEGPIS (661 aa)) the chain is on the extracellular side. N-linked (GlcNAc...) asparagine glycans are attached at residues Asn49, Asn62, Asn84, Asn108, Asn127, and Asn168. Cys60 and Cys68 are joined by a disulfide. 21 LRR repeats span residues 96-122 (LSSL…SLRN), 124-144 (RTLN…FVSL), 146-168 (ELRE…WFGN), 170-194 (SMNL…LLYL), 195-217 (KSLK…FQQP), 219-238 (VVLN…FYAS), 239-263 (RPSL…LGSL), 264-287 (KELS…LMFS), 288-311 (EKLV…ISET), 314-338 (KLGL…ITEL), 339-362 (KSLQ…IGNL), 364-386 (YLQV…IVGC), 388-410 (QLLA…LDAL), 411-436 (DSLK…GLKS), 438-458 (EIVD…ITKW), 459-482 (SNLK…LFKF), 484-506 (KIQM…NLNS), 547-571 (LLSM…LFRQ), 573-594 (NIEY…LEKL), 595-617 (PRLK…NISA), and 619-641 (PGLT…KEGL). Asn206 carries N-linked (GlcNAc...) asparagine glycosylation. Asn270 carries N-linked (GlcNAc...) asparagine glycosylation. A glycan (N-linked (GlcNAc...) asparagine) is linked at Asn361. A glycan (N-linked (GlcNAc...) asparagine) is linked at Asn398. Asn446 is a glycosylation site (N-linked (GlcNAc...) asparagine). Asn505 carries N-linked (GlcNAc...) asparagine glycosylation. 3 N-linked (GlcNAc...) asparagine glycosylation sites follow: Asn578, Asn614, and Asn625. Positions 649 to 682 (AGNPELCVETPGSKCDPANIDASQEEIYQNELVE) are C-cap/acidic domain. Residues 687 to 707 (IWIFCLSAFISFDFGVLGIFC) traverse the membrane as a helical segment. At 708 to 720 (SARARSYILQTKA) the chain is on the cytoplasmic side.

The protein belongs to the RLP family. In terms of assembly, parts of a tetrameric complex made of two CLV2/CRN heterodimers that can interact with CLV3 and CLE peptides. CLV2/CRN heterodimer interacts with CLV1 homodimers. Interacts with CRN; this dimer can interact with BAM3. Interacts with CLE14. Mostly expressed in apices (e.g. shoot apical meristem and flower buds), and, to a lower extent, in flowers, leaves, seedlings and siliques. Also expressed in the inner tissues of the proximal root meristem. Expressed throughout the vascular cylinder of root tips.

It localises to the cell membrane. The protein resides in the endoplasmic reticulum membrane. In terms of biological role, involved in the perception of CLV3 and CLV3-like (CLE) peptides, that act as extracellular signals regulating meristems maintenance. Required for the sensing of the root CLE peptides (e.g. CLE8, CLE9/CLE10, CLE11, CLE13, CLE14, CLE16, CLE17, CLE18, CLE20, CLE21, CLE25, CLE26, CLE40, CLE41/CLE44 and CLE45), which also involves CRN and leads to root growth regulation, mostly in the phloem and protophloem. Involved in controlling the stem cell population size in shoot and root apical meristems, and during organ development. Promotes the formation of CLV1 multimers. In complex with CRN, perceives secreted CLV3-like effector proteins from plant-parasitic cyst nematodes as ligand mimics of the plant CLE signaling pathway. This recognition is required for proper feeding structure (syncytium) development and ultimately successful nematode infection. CLE14 perception by CLV2/CRN complex triggers root meristem differentiation. The protein is Receptor-like protein CLAVATA2 of Arabidopsis thaliana (Mouse-ear cress).